Here is a 374-residue protein sequence, read N- to C-terminus: DNA replication and repair protein RecF (374 aa).

An ATP-binding site is contributed by 34–41 (GDNGAGKT).

Belongs to the RecF family.

Its subcellular location is the cytoplasm. The RecF protein is involved in DNA metabolism; it is required for DNA replication and normal SOS inducibility. RecF binds preferentially to single-stranded, linear DNA. It also seems to bind ATP. The protein is DNA replication and repair protein RecF of Rhizobium johnstonii (strain DSM 114642 / LMG 32736 / 3841) (Rhizobium leguminosarum bv. viciae).